Here is an 83-residue protein sequence, read N- to C-terminus: Hainantoxin-III 9 (83 aa).

Residues 1–21 form the signal peptide; sequence MKASMFLALAGLALLFVVCYA. The propeptide occupies 22 to 48; the sequence is SESEEKEFPIELLSKIFAVDVFKGEER. 3 disulfide bridges follow: C50–C65, C57–C70, and C64–C77. Leucine amide is present on L81.

This sequence belongs to the neurotoxin 10 (Hwtx-1) family. 15 (Hntx-3) subfamily. As to quaternary structure, monomer. In terms of tissue distribution, expressed by the venom gland.

It is found in the secreted. Functionally, selective antagonist of neuronal tetrodotoxin (TTX)-sensitive voltage-gated sodium channels (IC(50)=1270 nM on Nav1.1/SCN1A, 270 nM on Nav1.2/SCN2A, 491 nM on Nav1.3/SCN3A and 232 nM on Nav1.7/SCN9A). This toxin suppress Nav1.7 current amplitude without significantly altering the activation, inactivation, and repriming kinetics. Short extreme depolarizations partially activate the toxin-bound channel, indicating voltage-dependent inhibition of this toxin. This toxin increases the deactivation of the Nav1.7 current after extreme depolarizations. The toxin-Nav1.7 complex is gradually dissociated upon prolonged strong depolarizations in a voltage-dependent manner, and the unbound toxin rebinds to Nav1.7 after a long repolarization. Moreover, analysis of chimeric channels showed that the DIIS3-S4 linker is critical for toxin binding to Nav1.7. These data are consistent with this toxin interacting with Nav1.7 site 4 and trapping the domain II voltage sensor in the closed state. This chain is Hainantoxin-III 9, found in Cyriopagopus hainanus (Chinese bird spider).